A 226-amino-acid chain; its full sequence is ATP synthase F(0) complex subunit a (226 aa).

6 helical membrane-spanning segments follow: residues 14–34, 68–88, 97–117, 138–158, 164–184, and 193–213; these read ILGI…FSAP, WTLM…LGLL, QLSM…LMGF, IPML…ALAV, ITAG…LSSI, and FTIL…QAYV.

Belongs to the ATPase A chain family. Component of the ATP synthase complex composed at least of ATP5F1A/subunit alpha, ATP5F1B/subunit beta, ATP5MC1/subunit c (homooctomer), MT-ATP6/subunit a, MT-ATP8/subunit 8, ATP5ME/subunit e, ATP5MF/subunit f, ATP5MG/subunit g, ATP5MK/subunit k, ATP5MJ/subunit j, ATP5F1C/subunit gamma, ATP5F1D/subunit delta, ATP5F1E/subunit epsilon, ATP5PF/subunit F6, ATP5PB/subunit b, ATP5PD/subunit d, ATP5PO/subunit OSCP. ATP synthase complex consists of a soluble F(1) head domain (subunits alpha(3) and beta(3)) - the catalytic core - and a membrane F(0) domain - the membrane proton channel (subunits c, a, 8, e, f, g, k and j). These two domains are linked by a central stalk (subunits gamma, delta, and epsilon) rotating inside the F1 region and a stationary peripheral stalk (subunits F6, b, d, and OSCP). Interacts with DNAJC30; interaction is direct.

The protein resides in the mitochondrion inner membrane. It carries out the reaction H(+)(in) = H(+)(out). In terms of biological role, subunit a, of the mitochondrial membrane ATP synthase complex (F(1)F(0) ATP synthase or Complex V) that produces ATP from ADP in the presence of a proton gradient across the membrane which is generated by electron transport complexes of the respiratory chain. ATP synthase complex consist of a soluble F(1) head domain - the catalytic core - and a membrane F(1) domain - the membrane proton channel. These two domains are linked by a central stalk rotating inside the F(1) region and a stationary peripheral stalk. During catalysis, ATP synthesis in the catalytic domain of F(1) is coupled via a rotary mechanism of the central stalk subunits to proton translocation. With the subunit c (ATP5MC1), forms the proton-conducting channel in the F(0) domain, that contains two crucial half-channels (inlet and outlet) that facilitate proton movement from the mitochondrial intermembrane space (IMS) into the matrix. Protons are taken up via the inlet half-channel and released through the outlet half-channel, following a Grotthuss mechanism. This Tachyglossus aculeatus aculeatus (Southeast Australian short-beaked echidna) protein is ATP synthase F(0) complex subunit a.